The sequence spans 679 residues: Methionine--tRNA ligase (679 aa).

Positions 15 to 25 (PYANGPVHIGH) match the 'HIGH' region motif. Zn(2+) contacts are provided by Cys-147, Cys-150, Cys-160, and Cys-163. Positions 332–336 (KISTS) match the 'KMSKS' region motif. Thr-335 serves as a coordination point for ATP. Residues 578-679 (DFMKLDIRVG…REVKPGSEVK (102 aa)) form the tRNA-binding domain.

The protein belongs to the class-I aminoacyl-tRNA synthetase family. MetG type 1 subfamily. As to quaternary structure, homodimer. Zn(2+) serves as cofactor.

The protein resides in the cytoplasm. It catalyses the reaction tRNA(Met) + L-methionine + ATP = L-methionyl-tRNA(Met) + AMP + diphosphate. Functionally, is required not only for elongation of protein synthesis but also for the initiation of all mRNA translation through initiator tRNA(fMet) aminoacylation. In Bacteroides fragilis (strain ATCC 25285 / DSM 2151 / CCUG 4856 / JCM 11019 / LMG 10263 / NCTC 9343 / Onslow / VPI 2553 / EN-2), this protein is Methionine--tRNA ligase.